Here is a 334-residue protein sequence, read N- to C-terminus: Protein-methionine-sulfoxide reductase catalytic subunit MsrP (334 aa).

A signal peptide (tat-type signal) is located at residues 1-44 (MKKIRPLTEADVTAESAFFMQRRQVLKALGISAAALSLPSTAQA). Residues Asn-88, 91–92 (YE), Cys-146, Thr-181, Asn-233, Arg-238, and 249–251 (GIK) contribute to the Mo-molybdopterin site.

Belongs to the MsrP family. As to quaternary structure, heterodimer of a catalytic subunit (MsrP) and a heme-binding subunit (MsrQ). The cofactor is Mo-molybdopterin. Post-translationally, predicted to be exported by the Tat system. The position of the signal peptide cleavage has not been experimentally proven.

The protein resides in the periplasm. It carries out the reaction L-methionyl-[protein] + a quinone + H2O = L-methionyl-(S)-S-oxide-[protein] + a quinol. It catalyses the reaction L-methionyl-[protein] + a quinone + H2O = L-methionyl-(R)-S-oxide-[protein] + a quinol. Its function is as follows. Part of the MsrPQ system that repairs oxidized periplasmic proteins containing methionine sulfoxide residues (Met-O), using respiratory chain electrons. Thus protects these proteins from oxidative-stress damage caused by reactive species of oxygen and chlorine generated by the host defense mechanisms. MsrPQ is essential for the maintenance of envelope integrity under bleach stress, rescuing a wide series of structurally unrelated periplasmic proteins from methionine oxidation, including the primary periplasmic chaperone SurA and the lipoprotein Pal. The catalytic subunit MsrP is non-stereospecific, being able to reduce both (R-) and (S-) diastereoisomers of methionine sulfoxide. This chain is Protein-methionine-sulfoxide reductase catalytic subunit MsrP, found in Salmonella dublin (strain CT_02021853).